The primary structure comprises 297 residues: Release factor glutamine methyltransferase (297 aa).

S-adenosyl-L-methionine-binding positions include 134–138 (GTGSG), Asp-157, and Asn-200. Residue 200–203 (NPPY) participates in substrate binding.

This sequence belongs to the protein N5-glutamine methyltransferase family. PrmC subfamily.

The catalysed reaction is L-glutaminyl-[peptide chain release factor] + S-adenosyl-L-methionine = N(5)-methyl-L-glutaminyl-[peptide chain release factor] + S-adenosyl-L-homocysteine + H(+). Its function is as follows. Methylates the class 1 translation termination release factors RF1/PrfA and RF2/PrfB on the glutamine residue of the universally conserved GGQ motif. In Bradyrhizobium diazoefficiens (strain JCM 10833 / BCRC 13528 / IAM 13628 / NBRC 14792 / USDA 110), this protein is Release factor glutamine methyltransferase.